Consider the following 232-residue polypeptide: Cell cycle response regulator CtrA (232 aa).

A Response regulatory domain is found at 2–116 (RVLLIEDDSA…ELIARIHAIV (115 aa)). Residue aspartate 51 is modified to 4-aspartylphosphate. Residues 124–223 (QSVITTGDLV…VWGRGYVLRE (100 aa)) constitute a DNA-binding region (ompR/PhoB-type).

As to quaternary structure, forms an asymmetric heterotetramer with ChpT (2:2). There are at least two modes of interaction between ChpT and CtrA, only one of which is competent to catalyze His-Asp phosphoryl transfer. In terms of processing, is phosphorylated by ChpT-P on Asp-51.

It localises to the cytoplasm. Its function is as follows. Component of a regulatory phosphorelay system that controls B.abortus cell growth, division, and intracellular survival inside mammalian host cells. This signaling pathway is composed of CckA, ChpT, CtrA and CpdR. CtrA is a response regulator substrate of ChpT. When phosphorylated, directly regulates the expression of ccrM. Is also probably involved in the transcriptional regulation of rpoD, pleC, minC and ftsE genes. The sequence is that of Cell cycle response regulator CtrA (ctrA) from Brucella abortus (strain S19).